We begin with the raw amino-acid sequence, 670 residues long: Receptor for retinol uptake STRA6 (670 aa).

The Extracellular portion of the chain corresponds to 1–50 (MESQASENGSQTSSGVTDDYSSWYIEEPLGAEEVQPEGVIPLCQLTAPPA). Asparagine 8 carries N-linked (GlcNAc...) asparagine glycosylation. Residues 51 to 71 (LLHACLASLSFLVLLLLALLV) traverse the membrane as a helical segment. The Cytoplasmic segment spans residues 72 to 97 (RRRRLWPRCGHRGLGLPSPVDFLAGD). The chain crosses the membrane as a helical span at residues 98 to 118 (LSWTVPAAVFVVLFSNLCLLL). Topologically, residues 119-144 (PDENPLPFLNLTAASSPDGEMETSRG) are extracellular. N-linked (GlcNAc...) asparagine glycosylation occurs at asparagine 128. A helical transmembrane segment spans residues 145–165 (PWKLLALLYYPALYYPLAACA). Residues 166–168 (SAG) are Cytoplasmic-facing. The chain crosses the membrane as a helical span at residues 169–189 (HQAAFLLGTVLSWAHFGVQVW). The Extracellular segment spans residues 190-205 (QKAECPQDPKIYKHYS). A helical membrane pass occupies residues 206 to 226 (LLASLPLLLGLGFLSLWYPVQ). At 227-296 (LVQSLRHRTG…PQPGFRLPLK (70 aa)) the chain is on the cytoplasmic side. The interval 235–294 (TGAGSQGLQTSYSEKYLRTLLCPKKLDSCSHPASKRSLLSRAWAFSHHSIYTPQPGFRLP) is interaction with RBP1. Residues 297 to 317 (LVISATLTGTATYQVALLLLV) traverse the membrane as a helical segment. Residues 318–368 (SVVPTVQKVRAGINTDVSYLLAGFGIVLSEDRQEVVELVKHHLWTVEACYI) lie on the Extracellular side of the membrane. The chain crosses the membrane as a helical span at residues 369-389 (SALVLSCASTFLLLIRSLRTH). Residues 390 to 423 (RANLQALHRGAALDLDPPLQSIHPSRQAIVSWMS) lie on the Cytoplasmic side of the membrane. Residues 424–444 (FCAYQTAFSCLGLLVQQVIFF) traverse the membrane as a helical segment. Over 445-474 (LGTTSLAFLVFVPLLHGRNLLLLRSLESTW) the chain is Extracellular. Residues 475-495 (PFWLTVALAVILQNIAANWIF) traverse the membrane as a helical segment. At 496-510 (LRTHHGYPELTNRRM) the chain is on the cytoplasmic side. An intramembrane region (helical) is located at residues 511–548 (LCVATFLLFPINMLVGAIMAVWRVLISSLYNTVHLGQM). Residues 549–670 (DLSLLPQRAA…TSAKANGTQP (122 aa)) are Cytoplasmic-facing. The residue at position 644 (tyrosine 644) is a Phosphotyrosine.

As to quaternary structure, homodimer. Interacts with JAK2 and STAT5. Interacts (via extracellular domains) with RBP4. Interacts (via cytoplasmic domains) with RBP1. Post-translationally, phosphorylated on tyrosine residues in response to RBP4 binding. Phosphorylation requires the presence of LRAT, suggesting it may be triggered by the uptake of retinol that is then metabolized within the cell to retinoids that function as signaling molecules. As to expression, widely expressed in the embryo. Detected in adult in the retinal pigment epithelium in the eye. In the adult, is highly expressed in cells that compose blood-organ barriers in the brain (choroid plexus and the brain microvascular), in testis (the basal layer of the seminiferous epithelium), in the yolk sac, and in the chorioallantoic placenta. Detected in white adipose tissue and skeletal muscle, but not in liver (at protein level). Widely expressed in adult, with high expression levels in the eye. Detected in brain, cerebellum, testis, pituitary, pancreas, kidney, spleen, and female genital tract; and at very low levels in heart and lung. Not detected in liver.

Its subcellular location is the cell membrane. Functions as a retinol transporter. Accepts all-trans retinol from the extracellular retinol-binding protein RBP4, facilitates retinol transport across the cell membrane, and then transfers retinol to the cytoplasmic retinol-binding protein RBP1. Retinol uptake is enhanced by LRAT, an enzyme that converts retinol to all-trans retinyl esters, the storage forms of vitamin A. Contributes to the activation of a signaling cascade that depends on retinol transport and LRAT-dependent generation of retinol metabolites that then trigger activation of JAK2 and its target STAT5, and ultimately increase the expression of SOCS3 and inhibit cellular responses to insulin. Important for the homeostasis of vitamin A and its derivatives, such as retinoic acid and 11-cis-retinal. STRA6-mediated transport is particularly important in the eye, and under conditions of dietary vitamin A deficiency. Does not transport retinoic acid. The sequence is that of Receptor for retinol uptake STRA6 (Stra6) from Mus musculus (Mouse).